The following is a 227-amino-acid chain: NAD(P)H-quinone oxidoreductase subunit K, chloroplastic (227 aa).

Residues Cys43, Cys44, Cys108, and Cys139 each contribute to the [4Fe-4S] cluster site.

This sequence belongs to the complex I 20 kDa subunit family. In terms of assembly, NDH is composed of at least 16 different subunits, 5 of which are encoded in the nucleus. It depends on [4Fe-4S] cluster as a cofactor.

The protein resides in the plastid. The protein localises to the chloroplast thylakoid membrane. It carries out the reaction a plastoquinone + NADH + (n+1) H(+)(in) = a plastoquinol + NAD(+) + n H(+)(out). The enzyme catalyses a plastoquinone + NADPH + (n+1) H(+)(in) = a plastoquinol + NADP(+) + n H(+)(out). NDH shuttles electrons from NAD(P)H:plastoquinone, via FMN and iron-sulfur (Fe-S) centers, to quinones in the photosynthetic chain and possibly in a chloroplast respiratory chain. It has NADH- and deamino-NADH-specific dehydrogenase activity, using ferricyanide or quinones as acceptors. The immediate electron acceptor for the enzyme in this species is believed to be plastoquinone. Couples the redox reaction to proton translocation, and thus conserves the redox energy in a proton gradient. The protein is NAD(P)H-quinone oxidoreductase subunit K, chloroplastic of Pisum sativum (Garden pea).